Consider the following 255-residue polypeptide: Hemin import ATP-binding protein HmuV (255 aa).

The ABC transporter domain maps to L2–D238. Residue G34–S41 participates in ATP binding.

This sequence belongs to the ABC transporter superfamily. Heme (hemin) importer (TC 3.A.1.14.5) family. In terms of assembly, the complex is composed of two ATP-binding proteins (HmuV), two transmembrane proteins (HmuU) and a solute-binding protein (HmuT).

The protein resides in the cell inner membrane. Functionally, part of the ABC transporter complex HmuTUV involved in hemin import. Responsible for energy coupling to the transport system. The chain is Hemin import ATP-binding protein HmuV from Pseudomonas putida (strain ATCC 47054 / DSM 6125 / CFBP 8728 / NCIMB 11950 / KT2440).